A 230-amino-acid polypeptide reads, in one-letter code: UPF0688 protein C1orf174 homolog (230 aa).

Disordered stretches follow at residues 1-85 and 97-166; these read MRSR…SLPK and AEDS…VRAS. Over residues 11 to 30 the composition is skewed to low complexity; sequence RSSARLRARSYSSASLASAR. Polar residues predominate over residues 31 to 48; that stretch reads DVTSSTSAKTTCLASSSH. The segment covering 49-78 has biased composition (basic and acidic residues); sequence KATDRRTSKKFKYDKGHLVKAELQKLDPKS. Phosphoserine is present on serine 180.

It belongs to the UPF0688 family.

It localises to the nucleus. This chain is UPF0688 protein C1orf174 homolog, found in Mus musculus (Mouse).